The following is a 1239-amino-acid chain: WD repeat-containing protein 11 (1239 aa).

WD repeat units follow at residues 63 to 112 (RHKA…AHCE), 115 to 158 (EHSK…KLWK), 358 to 398 (TKTV…SKSS), 476 to 515 (RMCP…LHKE), 571 to 610 (NDEP…LLRE), 713 to 750 (GSMG…SRGV), 752 to 792 (THRG…MVSS), 798 to 836 (NVNY…ASYR), and 898 to 944 (SLSN…IQAF). Positions 1213–1239 (EDLSQTEGTGTESSPADDTDNSLVNIE) are disordered. Residues 1215–1226 (LSQTEGTGTESS) are compositionally biased toward polar residues.

In terms of assembly, component of the complex WDR11.

The protein localises to the cytoplasm. The protein resides in the cytoskeleton. It localises to the cilium basal body. Its subcellular location is the nucleus. It is found in the cilium axoneme. The protein localises to the cytoplasmic vesicle. The protein resides in the golgi apparatus. It localises to the trans-Golgi network. Functionally, involved in the Hedgehog (Hh) signaling pathway, is essential for normal ciliogenesis. Regulates the proteolytic processing of gli3 and cooperates with the transcription factor emx1 in the induction of downstream Hh pathway gene expression and gonadotropin-releasing hormone production. WDR11 complex facilitates the tethering of Adaptor protein-1 complex (AP-1)-derived vesicles. The chain is WD repeat-containing protein 11 (wdr11) from Danio rerio (Zebrafish).